Here is a 267-residue protein sequence, read N- to C-terminus: Multivesicular body subunit 12A (267 aa).

Residues 7 to 146 (AAPLSGVGWA…SFAIWCKKGA (140 aa)) enclose the MABP domain. The SH3-binding motif lies at 154 to 159 (PVPKPR). In terms of domain architecture, UMA spans 210-259 (MDGVPFTLHPKFERSPKSDSSAILTDLTVKSLADIEKEYNYTFVVERTAA).

It belongs to the MVB12 family. Component of the ESCRT-I complex (endosomal sorting complex required for transport I).

The protein resides in the cytoplasm. It is found in the endosome. It localises to the late endosome membrane. Its function is as follows. Component of the ESCRT-I complex, a regulator of vesicular trafficking process. Required for the sorting of endocytic ubiquitinated cargos into multivesicular bodies. This Gallus gallus (Chicken) protein is Multivesicular body subunit 12A (MVB12A).